We begin with the raw amino-acid sequence, 512 residues long: Protein OS-9 homolog (512 aa).

An N-terminal signal peptide occupies residues 1-17 (MRRFNLILLASLQLVGA). Residues 71–91 (QAREADARDNEAENKDQDGPS) form a disordered region. The segment covering 73-88 (READARDNEAENKDQD) has biased composition (basic and acidic residues). A glycan (N-linked (GlcNAc...) asparagine) is linked at Asn118. The region spanning 149 to 288 (DSCLYFMSGW…VVNTPRLCND (140 aa)) is the MRH domain. Residues Cys151 and Cys164 are joined by a disulfide bond. A mannooligosaccharide derivative contacts are provided by Trp158, Trp159, Gln171, Asp242, Arg248, Glu270, and Tyr276. Disulfide bonds link Cys241-Cys274 and Cys256-Cys286. 2 disordered regions span residues 329-349 (QVPLKQEDTGAKSGDAAPRDV) and 485-512 (AAAKAKGDDEEEVVEGSEEQFFDKKDEL). The span at 492-504 (DDEEEVVEGSEEQ) shows a compositional bias: acidic residues. The Prevents secretion from ER motif lies at 509–512 (KDEL).

The protein belongs to the OS-9 family. As to quaternary structure, interacts with missfolded ER lumenal proteins.

The protein resides in the endoplasmic reticulum membrane. In terms of biological role, lectin involved in the quality control of the secretory pathway. As a member of the endoplasmic reticulum-associated degradation lumenal (ERAD-L) surveillance system, targets misfolded endoplasmic reticulum lumenal glycoproteins for degradation. This chain is Protein OS-9 homolog (YOS1), found in Gibberella zeae (strain ATCC MYA-4620 / CBS 123657 / FGSC 9075 / NRRL 31084 / PH-1) (Wheat head blight fungus).